Reading from the N-terminus, the 317-residue chain is Ornithine carbamoyltransferase (317 aa).

Carbamoyl phosphate is bound by residues 54-57 (STRT), Gln-81, Arg-105, and 132-135 (HPCQ). L-ornithine contacts are provided by residues Asn-163, Asp-227, and 231–232 (SM). Residues 267–268 (CL) and Arg-295 contribute to the carbamoyl phosphate site.

The protein belongs to the aspartate/ornithine carbamoyltransferase superfamily. OTCase family.

It is found in the cytoplasm. It catalyses the reaction carbamoyl phosphate + L-ornithine = L-citrulline + phosphate + H(+). The protein operates within amino-acid biosynthesis; L-arginine biosynthesis; L-arginine from L-ornithine and carbamoyl phosphate: step 1/3. In terms of biological role, reversibly catalyzes the transfer of the carbamoyl group from carbamoyl phosphate (CP) to the N(epsilon) atom of ornithine (ORN) to produce L-citrulline. In Parafrankia sp. (strain EAN1pec), this protein is Ornithine carbamoyltransferase.